A 226-amino-acid chain; its full sequence is Pathogenesis-related protein R minor form (226 aa).

The signal sequence occupies residues Met1 to Ala25. Disulfide bonds link Cys34-Cys225, Cys75-Cys85, Cys90-Cys96, Cys140-Cys214, Cys145-Cys197, Cys153-Cys163, Cys167-Cys176, and Cys177-Cys184.

It belongs to the thaumatin family.

Its subcellular location is the vacuole. In Nicotiana tabacum (Common tobacco), this protein is Pathogenesis-related protein R minor form.